The primary structure comprises 274 residues: Probable endonuclease LCL3 (274 aa).

Residues Ala-15–Tyr-32 form a helical membrane-spanning segment. The 209-residue stretch at His-53–Gln-261 folds into the TNase-like domain. Residue Arg-151 is part of the active site. Residue Asp-156 coordinates Ca(2+). Active-site residues include Glu-159 and Arg-199.

The protein belongs to the LCL3 family.

The protein resides in the mitochondrion. It is found in the membrane. The protein is Probable endonuclease LCL3 (LCL3) of Saccharomyces cerevisiae (strain Lalvin EC1118 / Prise de mousse) (Baker's yeast).